Reading from the N-terminus, the 600-residue chain is Prostaglandin G/H synthase 1 (600 aa).

An N-terminal signal peptide occupies residues 1 to 24 (MSRQSISLRFPLLLLLLSPSPVFS). In terms of domain architecture, EGF-like spans 32–70 (PVNPCCYYPCQHQGICVRFGLDRYQCDCTRTGYSGPNCT). 4 cysteine pairs are disulfide-bonded: Cys-36–Cys-47, Cys-37–Cys-159, Cys-41–Cys-57, and Cys-59–Cys-69. Asn-68 carries N-linked (GlcNAc...) asparagine glycosylation. 4 consecutive transmembrane segments (helical) span residues 74–82 (IWTWLRTTL), 86–92 (PSFIHFL), 97–105 (RWLWDFVNA), and 108–122 (IRDTLMRLVLTVRSN). Residue Asn-144 is glycosylated (N-linked (GlcNAc...) asparagine). Residue His-207 is the Proton acceptor of the active site. Tyr-385 serves as the catalytic For cyclooxygenase activity. His-388 serves as a coordination point for heme b. N-linked (GlcNAc...) asparagine glycosylation occurs at Asn-410. Cys-569 and Cys-575 are oxidised to a cystine.

It belongs to the prostaglandin G/H synthase family. Homodimer. It depends on heme b as a cofactor.

It is found in the endoplasmic reticulum membrane. It localises to the microsome membrane. The catalysed reaction is (5Z,8Z,11Z,14Z)-eicosatetraenoate + AH2 + 2 O2 = prostaglandin H2 + A + H2O. It carries out the reaction (5Z,8Z,11Z,14Z)-eicosatetraenoate + 2 O2 = prostaglandin G2. The enzyme catalyses prostaglandin G2 + AH2 = prostaglandin H2 + A + H2O. It catalyses the reaction (9Z,12Z)-octadecadienoate + AH2 + O2 = (9R)-hydroxy-(10E,12Z)-octadecadienoate + A + H2O. The catalysed reaction is (9Z,12Z)-octadecadienoate + AH2 + O2 = (9S)-hydroxy-(10E,12Z)-octadecadienoate + A + H2O. It carries out the reaction (9Z,12Z)-octadecadienoate + AH2 + O2 = (13S)-hydroxy-(9Z,11E)-octadecadienoate + A + H2O. The enzyme catalyses (9Z,12Z)-octadecadienoate + AH2 + O2 = (13R)-hydroxy-(9Z,11E)-octadecadienoate + A + H2O. The protein operates within lipid metabolism; prostaglandin biosynthesis. With respect to regulation, the cyclooxygenase activity is inhibited by nonsteroidal anti-inflammatory drugs (NSAIDs) including ibuprofen, flurbiprofen, ketoprofen, naproxen, flurbiprofen, anirolac, fenclofenac and diclofenac. In terms of biological role, dual cyclooxygenase and peroxidase that plays an important role in the biosynthesis pathway of prostanoids, a class of C20 oxylipins mainly derived from arachidonate ((5Z,8Z,11Z,14Z)-eicosatetraenoate, AA, C20:4(n-6)), with a particular role in the inflammatory response. The cyclooxygenase activity oxygenates AA to the hydroperoxy endoperoxide prostaglandin G2 (PGG2), and the peroxidase activity reduces PGG2 to the hydroxy endoperoxide prostaglandin H2 (PGH2), the precursor of all 2-series prostaglandins and thromboxanes. This complex transformation is initiated by abstraction of hydrogen at carbon 13 (with S-stereochemistry), followed by insertion of molecular O2 to form the endoperoxide bridge between carbon 9 and 11 that defines prostaglandins. The insertion of a second molecule of O2 (bis-oxygenase activity) yields a hydroperoxy group in PGG2 that is then reduced to PGH2 by two electrons. Involved in the constitutive production of prostanoids in particular in the stomach and platelets. In gastric epithelial cells, it is a key step in the generation of prostaglandins, such as prostaglandin E2 (PGE2), which plays an important role in cytoprotection. In platelets, it is involved in the generation of thromboxane A2 (TXA2), which promotes platelet activation and aggregation, vasoconstriction and proliferation of vascular smooth muscle cells. Can also use linoleate (LA, (9Z,12Z)-octadecadienoate, C18:2(n-6)) as substrate and produce hydroxyoctadecadienoates (HODEs) in a regio- and stereospecific manner, being (9R)-HODE ((9R)-hydroxy-(10E,12Z)-octadecadienoate) and (13S)-HODE ((13S)-hydroxy-(9Z,11E)-octadecadienoate) its major products. The protein is Prostaglandin G/H synthase 1 (PTGS1) of Ovis aries (Sheep).